A 584-amino-acid polypeptide reads, in one-letter code: Tyrosine-protein kinase Dnt (584 aa).

An N-terminal signal peptide occupies residues 1–40; it reads MESVNKCGKSASTRNCTVKMSRKMWVLSLLALAALQLHSG. Topologically, residues 41–208 are extracellular; that stretch reads SEVAAHLNVF…LETVMLPPTG (168 aa). The region spanning 49–180 is the WIF domain; it reads VFLNPVEVMR…HLVFRRKKIC (132 aa). 4 N-linked (GlcNAc...) asparagine glycosylation sites follow: asparagine 124, asparagine 163, asparagine 168, and asparagine 183. A helical membrane pass occupies residues 209-229; it reads LITLVVGVSVAMGSVCLLLMI. Over 230-584 the chain is Cytoplasmic; sequence AYCVKGAANK…EFYSQITRYV (355 aa). Residues 241-261 form a disordered region; it reads QHHQHGGQPMRTSSFQRLNTH. Polar residues predominate over residues 250–261; the sequence is MRTSSFQRLNTH. The Protein kinase domain maps to 317 to 577; it reads VRLSSLLQEG…QLQSCLSEFY (261 aa). ATP is bound by residues 323–331 and lysine 345; that span reads LQEGTFGRV. Aspartate 442 (proton acceptor) is an active-site residue. The residue at position 472 (tyrosine 472) is a Phosphotyrosine; by autocatalysis.

This sequence belongs to the protein kinase superfamily. Tyr protein kinase family. In terms of tissue distribution, expressed in dynamic domains in the embryonic epidermis, many of which border on sites of epithelial invagination into the embryo interior, including ventral furrow, cephalic furrow, fore- and hindgut, optic lobe and tracheal pits. Later in embryogenesis, expression is seen in imaginal tissues.

It is found in the cell membrane. The catalysed reaction is L-tyrosyl-[protein] + ATP = O-phospho-L-tyrosyl-[protein] + ADP + H(+). In terms of biological role, may play an essential role in neuronal pathway recognition and ventral muscle attachment site selection. The protein is Tyrosine-protein kinase Dnt (dnt) of Drosophila melanogaster (Fruit fly).